Consider the following 197-residue polypeptide: Protein GrpE (197 aa).

A disordered region spans residues 1–40 (MSSKEQKTPEGQAPEEIIMDRHEEIEAVEPEASAEQVDPR).

Belongs to the GrpE family. In terms of assembly, homodimer.

The protein localises to the cytoplasm. Its function is as follows. Participates actively in the response to hyperosmotic and heat shock by preventing the aggregation of stress-denatured proteins, in association with DnaK and GrpE. It is the nucleotide exchange factor for DnaK and may function as a thermosensor. Unfolded proteins bind initially to DnaJ; upon interaction with the DnaJ-bound protein, DnaK hydrolyzes its bound ATP, resulting in the formation of a stable complex. GrpE releases ADP from DnaK; ATP binding to DnaK triggers the release of the substrate protein, thus completing the reaction cycle. Several rounds of ATP-dependent interactions between DnaJ, DnaK and GrpE are required for fully efficient folding. This Shigella flexneri serotype 5b (strain 8401) protein is Protein GrpE.